The primary structure comprises 133 residues: Interleukin-4 (133 aa).

The first 24 residues, 1-24, serve as a signal peptide directing secretion; it reads MGLTSQLIPMLVCLLACTSNFVHG. Intrachain disulfides connect Cys27-Cys133, Cys48-Cys85, and Cys70-Cys105. N-linked (GlcNAc...) asparagine glycosylation is found at Asn62, Asn96, and Asn102.

The protein belongs to the IL-4/IL-13 family.

It is found in the secreted. Participates in at least several B-cell activation processes as well as of other cell types. It is a costimulator of DNA-synthesis. It induces the expression of class II MHC molecules on resting B-cells. It enhances both secretion and cell surface expression of IgE and IgG1. It also regulates the expression of the low affinity Fc receptor for IgE (CD23) on both lymphocytes and monocytes. Positively regulates IL31RA expression in macrophages. Stimulates autophagy in dendritic cells by interfering with mTORC1 signaling and through the induction of RUFY4. This is Interleukin-4 (IL4) from Tursiops truncatus (Atlantic bottle-nosed dolphin).